The primary structure comprises 580 residues: Tetratricopeptide repeat protein 39C (580 aa).

TPR repeat units lie at residues 312–345 (SLFMFFKGRIQRLECQINSALTSFHTALELAVDQ), 350–383 (HVCLYEIGWCSMIELNFKDAFDSFERLKNESRWS), and 482–515 (GLKHLLLGAIHKCLGNSQDALQFFQRAARDELCR).

The protein belongs to the TTC39 family.

This Mus musculus (Mouse) protein is Tetratricopeptide repeat protein 39C (Ttc39c).